Consider the following 414-residue polypeptide: 3-phosphoshikimate 1-carboxyvinyltransferase (414 aa).

3-phosphoshikimate-binding residues include Lys20, Ser21, and Arg25. Lys20 is a phosphoenolpyruvate binding site. The phosphoenolpyruvate site is built by Gly85 and Arg113. Ser154, Ser155, Gln156, Ser181, Asp296, and Lys323 together coordinate 3-phosphoshikimate. Gln156 is a binding site for phosphoenolpyruvate. Asp296 serves as the catalytic Proton acceptor. The phosphoenolpyruvate site is built by Arg327, Arg371, and Lys395.

The protein belongs to the EPSP synthase family. In terms of assembly, monomer.

Its subcellular location is the cytoplasm. The catalysed reaction is 3-phosphoshikimate + phosphoenolpyruvate = 5-O-(1-carboxyvinyl)-3-phosphoshikimate + phosphate. It functions in the pathway metabolic intermediate biosynthesis; chorismate biosynthesis. Catalyzes the transfer of the enolpyruvyl moiety of phosphoenolpyruvate (PEP) to the 5-hydroxyl of shikimate-3-phosphate (S3P) to produce enolpyruvyl shikimate-3-phosphate and inorganic phosphate. The sequence is that of 3-phosphoshikimate 1-carboxyvinyltransferase from Saccharolobus islandicus (strain Y.G.57.14 / Yellowstone #1) (Sulfolobus islandicus).